The chain runs to 291 residues: Elongation factor Ts (291 aa).

The tract at residues 79-82 (TDFV) is involved in Mg(2+) ion dislocation from EF-Tu.

It belongs to the EF-Ts family.

The protein localises to the cytoplasm. Its function is as follows. Associates with the EF-Tu.GDP complex and induces the exchange of GDP to GTP. It remains bound to the aminoacyl-tRNA.EF-Tu.GTP complex up to the GTP hydrolysis stage on the ribosome. This chain is Elongation factor Ts, found in Ruegeria pomeroyi (strain ATCC 700808 / DSM 15171 / DSS-3) (Silicibacter pomeroyi).